The chain runs to 312 residues: Ribosomal RNA small subunit methyltransferase H (312 aa).

S-adenosyl-L-methionine contacts are provided by residues 35 to 37 (GGH), aspartate 55, phenylalanine 80, aspartate 102, and glutamine 109.

Belongs to the methyltransferase superfamily. RsmH family.

It localises to the cytoplasm. The enzyme catalyses cytidine(1402) in 16S rRNA + S-adenosyl-L-methionine = N(4)-methylcytidine(1402) in 16S rRNA + S-adenosyl-L-homocysteine + H(+). In terms of biological role, specifically methylates the N4 position of cytidine in position 1402 (C1402) of 16S rRNA. The chain is Ribosomal RNA small subunit methyltransferase H from Pseudoalteromonas translucida (strain TAC 125).